The primary structure comprises 189 residues: Riboflavin transporter RibU (189 aa).

Over 1-9 (MNGRRKLNM) the chain is Cytoplasmic. A helical membrane pass occupies residues 10–29 (QQNKRLITISMLSAIAFVLT). At 30–44 (FIKFPIPFLPPYLTL) the chain is on the periplasmic side. The helical intramembrane region spans 45-56 (DFSDVPSLLATF). At 57 to 58 (TF) the chain is on the cytoplasmic side. The helical transmembrane segment at 59-78 (GPVAGIIVALVKNLLNYLFS) threads the bilayer. At 79 to 82 (MGDP) the chain is on the periplasmic side. Residues 83–104 (VGPFANFLAGASFLLTAYAIYK) traverse the membrane as a helical segment. The Cytoplasmic portion of the chain corresponds to 105 to 107 (NKR). A helical membrane pass occupies residues 108–132 (STKSLITGLIIATIVMTIVLSILNY). Residues 133-159 (FVLLPLYGMIFNLADIANNLKVIIVSG) are Periplasmic-facing. A helical transmembrane segment spans residues 160–182 (IIPFNIIKGIVISIVFILLYRRL). Residues 183 to 189 (ANFLKRI) are Cytoplasmic-facing.

This sequence belongs to the prokaryotic riboflavin transporter (P-RFT) (TC 2.A.87) family. Forms a stable energy-coupling factor (ECF) transporter complex composed of a membrane-embedded substrate-binding protein (S component), 2 ATP-binding proteins (A component) and 2 transmembrane proteins (T component). May be able to interact with more than 1 S component at a time.

Its subcellular location is the cell membrane. In terms of biological role, mediates riboflavin uptake, may also transport FMN and roseoflavin. Probably a riboflavin-binding protein that interacts with the energy-coupling factor (ECF) ABC-transporter complex. Unlike classic ABC transporters this ECF transporter provides the energy necessary to transport a number of different substrates. The substrates themselves are bound by transmembrane, not extracytoplasmic soluble proteins. The sequence is that of Riboflavin transporter RibU (ribU) from Staphylococcus aureus (strain TCH60).